The sequence spans 1131 residues: Phytochrome B1 (1131 aa).

Over residues 1–11 (MASGSRTKHSY) the composition is skewed to basic residues. A disordered region spans residues 1–26 (MASGSRTKHSYHNSSQGQAQSSGTSN). Residues 14–25 (SSQGQAQSSGTS) are compositionally biased toward low complexity. The GAF domain occupies 229–408 (DIKLLCDTVV…AFGLQLNMEL (180 aa)). C334 is a phytochromobilin binding site. PAS domains lie at 622 to 693 (VARE…LRGV) and 756 to 808 (DYKA…GEIF). The Histidine kinase domain maps to 904–1124 (YICQEVKSPL…MIILDLPMTR (221 aa)).

Belongs to the phytochrome family. As to quaternary structure, homodimer. Post-translationally, contains one covalently linked phytochromobilin chromophore.

Its function is as follows. Regulatory photoreceptor which exists in two forms that are reversibly interconvertible by light: the Pr form that absorbs maximally in the red region of the spectrum and the Pfr form that absorbs maximally in the far-red region. Photoconversion of Pr to Pfr induces an array of morphogenic responses, whereas reconversion of Pfr to Pr cancels the induction of those responses. Pfr controls the expression of a number of nuclear genes including those encoding the small subunit of ribulose-bisphosphate carboxylase, chlorophyll A/B binding protein, protochlorophyllide reductase, rRNA, etc. It also controls the expression of its own gene(s) in a negative feedback fashion. The sequence is that of Phytochrome B1 from Solanum lycopersicum (Tomato).